The chain runs to 213 residues: Orotate phosphoribosyltransferase (213 aa).

K26 contacts 5-phospho-alpha-D-ribose 1-diphosphate. Residue 34 to 35 (FF) participates in orotate binding. 5-phospho-alpha-D-ribose 1-diphosphate contacts are provided by residues 72-73 (YK), R99, K100, K103, H105, and 124-132 (DDVITAGTA). The orotate site is built by T128 and R156.

The protein belongs to the purine/pyrimidine phosphoribosyltransferase family. PyrE subfamily. As to quaternary structure, homodimer. It depends on Mg(2+) as a cofactor.

It catalyses the reaction orotidine 5'-phosphate + diphosphate = orotate + 5-phospho-alpha-D-ribose 1-diphosphate. The protein operates within pyrimidine metabolism; UMP biosynthesis via de novo pathway; UMP from orotate: step 1/2. Catalyzes the transfer of a ribosyl phosphate group from 5-phosphoribose 1-diphosphate to orotate, leading to the formation of orotidine monophosphate (OMP). The chain is Orotate phosphoribosyltransferase from Yersinia enterocolitica serotype O:8 / biotype 1B (strain NCTC 13174 / 8081).